A 274-amino-acid polypeptide reads, in one-letter code: S-adenosylmethionine decarboxylase proenzyme (274 aa).

Ser-119 (schiff-base intermediate with substrate; via pyruvic acid) is an active-site residue. The residue at position 119 (Ser-119) is a Pyruvic acid (Ser); by autocatalysis. The active-site Proton acceptor; for processing activity is His-124. Cys-147 acts as the Proton donor; for catalytic activity in catalysis.

Belongs to the prokaryotic AdoMetDC family. Type 2 subfamily. Heterooctamer of four alpha and four beta chains arranged as a tetramer of alpha/beta heterodimers. Requires pyruvate as cofactor. Is synthesized initially as an inactive proenzyme. Formation of the active enzyme involves a self-maturation process in which the active site pyruvoyl group is generated from an internal serine residue via an autocatalytic post-translational modification. Two non-identical subunits are generated from the proenzyme in this reaction, and the pyruvate is formed at the N-terminus of the alpha chain, which is derived from the carboxyl end of the proenzyme. The post-translation cleavage follows an unusual pathway, termed non-hydrolytic serinolysis, in which the side chain hydroxyl group of the serine supplies its oxygen atom to form the C-terminus of the beta chain, while the remainder of the serine residue undergoes an oxidative deamination to produce ammonia and the pyruvoyl group blocking the N-terminus of the alpha chain.

The enzyme catalyses S-adenosyl-L-methionine + H(+) = S-adenosyl 3-(methylsulfanyl)propylamine + CO2. It participates in amine and polyamine biosynthesis; S-adenosylmethioninamine biosynthesis; S-adenosylmethioninamine from S-adenosyl-L-methionine: step 1/1. Catalyzes the decarboxylation of S-adenosylmethionine to S-adenosylmethioninamine (dcAdoMet), the propylamine donor required for the synthesis of the polyamines spermine and spermidine from the diamine putrescine. This is S-adenosylmethionine decarboxylase proenzyme from Clostridium acetobutylicum (strain ATCC 824 / DSM 792 / JCM 1419 / IAM 19013 / LMG 5710 / NBRC 13948 / NRRL B-527 / VKM B-1787 / 2291 / W).